The following is a 365-amino-acid chain: UDP-N-acetylglucosamine--N-acetylmuramyl-(pentapeptide) pyrophosphoryl-undecaprenol N-acetylglucosamine transferase (365 aa).

Residues 19–21, asparagine 131, arginine 170, serine 201, isoleucine 255, 274–279, and glutamine 300 contribute to the UDP-N-acetyl-alpha-D-glucosamine site; these read TGG and ALTVTE.

Belongs to the glycosyltransferase 28 family. MurG subfamily.

Its subcellular location is the cell inner membrane. The catalysed reaction is di-trans,octa-cis-undecaprenyl diphospho-N-acetyl-alpha-D-muramoyl-L-alanyl-D-glutamyl-meso-2,6-diaminopimeloyl-D-alanyl-D-alanine + UDP-N-acetyl-alpha-D-glucosamine = di-trans,octa-cis-undecaprenyl diphospho-[N-acetyl-alpha-D-glucosaminyl-(1-&gt;4)]-N-acetyl-alpha-D-muramoyl-L-alanyl-D-glutamyl-meso-2,6-diaminopimeloyl-D-alanyl-D-alanine + UDP + H(+). It functions in the pathway cell wall biogenesis; peptidoglycan biosynthesis. Cell wall formation. Catalyzes the transfer of a GlcNAc subunit on undecaprenyl-pyrophosphoryl-MurNAc-pentapeptide (lipid intermediate I) to form undecaprenyl-pyrophosphoryl-MurNAc-(pentapeptide)GlcNAc (lipid intermediate II). In Acinetobacter baumannii (strain ACICU), this protein is UDP-N-acetylglucosamine--N-acetylmuramyl-(pentapeptide) pyrophosphoryl-undecaprenol N-acetylglucosamine transferase.